A 108-amino-acid chain; its full sequence is ATP synthase peripheral stalk subunit F6, mitochondrial (108 aa).

The N-terminal 32 residues, 1-32 (MILQRLFRFSSVIRSAVSVHLRRNIGVTAVAF), are a transit peptide targeting the mitochondrion. N6-acetyllysine occurs at positions 41 and 46. A Phosphoserine modification is found at serine 65. Position 79 is an N6-acetyllysine (lysine 79). Lysine 94 and lysine 99 each carry N6-acetyllysine; alternate. 2 positions are modified to N6-succinyllysine; alternate: lysine 94 and lysine 99. N6-acetyllysine is present on lysine 105.

This sequence belongs to the eukaryotic ATPase subunit F6 family. As to quaternary structure, component of the ATP synthase complex composed at least of ATP5F1A/subunit alpha, ATP5F1B/subunit beta, ATP5MC1/subunit c (homooctomer), MT-ATP6/subunit a, MT-ATP8/subunit 8, ATP5ME/subunit e, ATP5MF/subunit f, ATP5MG/subunit g, ATP5MK/subunit k, ATP5MJ/subunit j, ATP5F1C/subunit gamma, ATP5F1D/subunit delta, ATP5F1E/subunit epsilon, ATP5PF/subunit F6, ATP5PB/subunit b, ATP5PD/subunit d, ATP5PO/subunit OSCP. ATP synthase complex consists of a soluble F(1) head domain (subunits alpha(3) and beta(3)) - the catalytic core - and a membrane F(0) domain - the membrane proton channel (subunits c, a, 8, e, f, g, k and j). These two domains are linked by a central stalk (subunits gamma, delta, and epsilon) rotating inside the F1 region and a stationary peripheral stalk (subunits F6, b, d, and OSCP).

Its subcellular location is the mitochondrion. It localises to the mitochondrion inner membrane. Subunit F6, of the mitochondrial membrane ATP synthase complex (F(1)F(0) ATP synthase or Complex V) that produces ATP from ADP in the presence of a proton gradient across the membrane which is generated by electron transport complexes of the respiratory chain. ATP synthase complex consist of a soluble F(1) head domain - the catalytic core - and a membrane F(1) domain - the membrane proton channel. These two domains are linked by a central stalk rotating inside the F(1) region and a stationary peripheral stalk. During catalysis, ATP synthesis in the catalytic domain of F(1) is coupled via a rotary mechanism of the central stalk subunits to proton translocation. In vivo, can only synthesize ATP although its ATP hydrolase activity can be activated artificially in vitro. Part of the complex F(0) domain. Part of the complex F(0) domain and the peripheric stalk, which acts as a stator to hold the catalytic alpha(3)beta(3) subcomplex and subunit a/ATP6 static relative to the rotary elements. The sequence is that of ATP synthase peripheral stalk subunit F6, mitochondrial from Homo sapiens (Human).